The sequence spans 101 residues: Urease subunit beta (101 aa).

This sequence belongs to the urease beta subunit family. In terms of assembly, heterotrimer of UreA (gamma), UreB (beta) and UreC (alpha) subunits. Three heterotrimers associate to form the active enzyme.

It is found in the cytoplasm. The enzyme catalyses urea + 2 H2O + H(+) = hydrogencarbonate + 2 NH4(+). It functions in the pathway nitrogen metabolism; urea degradation; CO(2) and NH(3) from urea (urease route): step 1/1. In Rhizobium johnstonii (strain DSM 114642 / LMG 32736 / 3841) (Rhizobium leguminosarum bv. viciae), this protein is Urease subunit beta.